We begin with the raw amino-acid sequence, 601 residues long: Proline--tRNA ligase (601 aa).

Belongs to the class-II aminoacyl-tRNA synthetase family. ProS type 1 subfamily. In terms of assembly, homodimer.

Its subcellular location is the cytoplasm. It carries out the reaction tRNA(Pro) + L-proline + ATP = L-prolyl-tRNA(Pro) + AMP + diphosphate. Its function is as follows. Catalyzes the attachment of proline to tRNA(Pro) in a two-step reaction: proline is first activated by ATP to form Pro-AMP and then transferred to the acceptor end of tRNA(Pro). As ProRS can inadvertently accommodate and process non-cognate amino acids such as alanine and cysteine, to avoid such errors it has two additional distinct editing activities against alanine. One activity is designated as 'pretransfer' editing and involves the tRNA(Pro)-independent hydrolysis of activated Ala-AMP. The other activity is designated 'posttransfer' editing and involves deacylation of mischarged Ala-tRNA(Pro). The misacylated Cys-tRNA(Pro) is not edited by ProRS. This is Proline--tRNA ligase from Tropheryma whipplei (strain TW08/27) (Whipple's bacillus).